A 397-amino-acid polypeptide reads, in one-letter code: Mannonate dehydratase (397 aa).

Belongs to the mannonate dehydratase family. The cofactor is Fe(2+). Requires Mn(2+) as cofactor.

The enzyme catalyses D-mannonate = 2-dehydro-3-deoxy-D-gluconate + H2O. It functions in the pathway carbohydrate metabolism; pentose and glucuronate interconversion. Catalyzes the dehydration of D-mannonate. This is Mannonate dehydratase from Saccharophagus degradans (strain 2-40 / ATCC 43961 / DSM 17024).